The following is a 234-amino-acid chain: Glucosamine-6-phosphate deaminase (234 aa).

The active-site Proton acceptor; for enolization step is aspartate 62. Asparagine 128 functions as the For ring-opening step in the catalytic mechanism. The Proton acceptor; for ring-opening step role is filled by histidine 130. The active-site For ring-opening step is glutamate 135.

Belongs to the glucosamine/galactosamine-6-phosphate isomerase family. NagB subfamily.

It catalyses the reaction alpha-D-glucosamine 6-phosphate + H2O = beta-D-fructose 6-phosphate + NH4(+). It functions in the pathway amino-sugar metabolism; N-acetylneuraminate degradation; D-fructose 6-phosphate from N-acetylneuraminate: step 5/5. Its function is as follows. Catalyzes the reversible isomerization-deamination of glucosamine 6-phosphate (GlcN6P) to form fructose 6-phosphate (Fru6P) and ammonium ion. The protein is Glucosamine-6-phosphate deaminase of Streptococcus pyogenes serotype M49 (strain NZ131).